The chain runs to 202 residues: Crustacean calcium-binding protein 23 (202 aa).

S1 carries the post-translational modification N-acetylserine. 4 consecutive EF-hand domains span residues 33–68 (SGLL…FGLD), 69–104 (LSDG…EMTE), 105–140 (PRKK…KTHP), and 148–185 (TEDE…LSKA). Ca(2+) contacts are provided by D84, E93, D118, D122, and D129.

In terms of assembly, monomer or disulfide-linked dimers. As to expression, striated muscle and brain.

In terms of biological role, possibly acts as a regulatory protein and not as a calcium buffer or transport protein. The sequence is that of Crustacean calcium-binding protein 23 from Faxonius limosus (Spinycheek crayfish).